A 201-amino-acid polypeptide reads, in one-letter code: Bradykinin potentiating and C-type natriuretic peptides (201 aa).

Residues 1-23 (MFVSRLAASGLLLLALLAVSLDG) form the signal peptide. Positions 24 to 47 (KPVQQWSQNWPGPKVPPLVVQQWS) are excised as a propeptide. At Gln-48 the chain carries Pyrrolidone carboxylic acid. Positions 58 to 60 (LVV) are excised as a propeptide. Pyrrolidone carboxylic acid is present on Gln-61. 2 consecutive propeptides follow at residues 67–95 (TQLQPRESPAGGTTALREELSLGPDAALD) and 107–179 (GSKA…LAKK). The segment at 90-172 (PDAALDTPPA…GGGGGGGARR (83 aa)) is disordered. The segment covering 120–130 (SKGASATSTAS) has biased composition (low complexity). Basic and acidic residues predominate over residues 132 to 142 (PMRDLRTDGKQ). Residues 159–170 (PGGGGGGGGGGA) show a composition bias toward gly residues. Residues Cys-185 and Cys-201 are joined by a disulfide bond.

It in the N-terminal section; belongs to the bradykinin-potentiating peptide family. In the central section; belongs to the bradykinin inhibitor peptide family. This sequence in the C-terminal section; belongs to the natriuretic peptide family. As to expression, venom gland.

It is found in the secreted. In terms of biological role, inhibits the activity of the angiotensin-converting enzyme (ACE) by a preferential interaction with its C-domain. May also potentiate the hypotensive effects of bradykinin. Functionally, antagonizes the vasodilatory actions of bradykinin at the B2 bradykinin receptor. Has a vasorelaxant activity in rat aortic strips and a diuretic potency in anesthetized rats. May act by activating natriuretic receptors (NPR1 and/or NPR2). In Sistrurus catenatus edwardsii (Desert massasauga), this protein is Bradykinin potentiating and C-type natriuretic peptides.